The sequence spans 272 residues: Indole-3-glycerol phosphate synthase (272 aa).

It belongs to the TrpC family.

It carries out the reaction 1-(2-carboxyphenylamino)-1-deoxy-D-ribulose 5-phosphate + H(+) = (1S,2R)-1-C-(indol-3-yl)glycerol 3-phosphate + CO2 + H2O. It functions in the pathway amino-acid biosynthesis; L-tryptophan biosynthesis; L-tryptophan from chorismate: step 4/5. In Mycolicibacterium gilvum (strain PYR-GCK) (Mycobacterium gilvum (strain PYR-GCK)), this protein is Indole-3-glycerol phosphate synthase.